Reading from the N-terminus, the 295-residue chain is MTDYKEIATPSRTKEILKKHGFSFKKSLGQNFLTEPNILRKIVETAGINQQTNVVEVGPGIGALTEQLAMNAAQVVAFEIDDRLIPVLADTLSRYDNVTVVHQDVLKADLVETTNQVFQEKYPIKVVANLPYYITTPIMMHFLESSLDVAEMVVMMQKEVADRIAAKPGTKAYGSLSIAVQYFMEASVAFIVPKTVFVPQPNVDSAIIKLTRRATPAVTVTNEKEFFKLTKASFQLRRKTLWNNLTHFYGKDEQTVAWLKESLAEAEIDPSRRGETLSLEEFARLSNALEKNKPV.

Residues N31, L33, G58, E79, D104, and N129 each coordinate S-adenosyl-L-methionine.

This sequence belongs to the class I-like SAM-binding methyltransferase superfamily. rRNA adenine N(6)-methyltransferase family. RsmA subfamily.

It is found in the cytoplasm. The enzyme catalyses adenosine(1518)/adenosine(1519) in 16S rRNA + 4 S-adenosyl-L-methionine = N(6)-dimethyladenosine(1518)/N(6)-dimethyladenosine(1519) in 16S rRNA + 4 S-adenosyl-L-homocysteine + 4 H(+). In terms of biological role, specifically dimethylates two adjacent adenosines (A1518 and A1519) in the loop of a conserved hairpin near the 3'-end of 16S rRNA in the 30S particle. May play a critical role in biogenesis of 30S subunits. The sequence is that of Ribosomal RNA small subunit methyltransferase A from Enterococcus faecalis (strain ATCC 700802 / V583).